The following is a 419-amino-acid chain: Serine hydroxymethyltransferase (419 aa).

(6S)-5,6,7,8-tetrahydrofolate contacts are provided by residues Leu121 and 125 to 127 (GHL). Position 229 is an N6-(pyridoxal phosphate)lysine (Lys229).

It belongs to the SHMT family. Homodimer. Pyridoxal 5'-phosphate is required as a cofactor.

It is found in the cytoplasm. The catalysed reaction is (6R)-5,10-methylene-5,6,7,8-tetrahydrofolate + glycine + H2O = (6S)-5,6,7,8-tetrahydrofolate + L-serine. It participates in one-carbon metabolism; tetrahydrofolate interconversion. Its pathway is amino-acid biosynthesis; glycine biosynthesis; glycine from L-serine: step 1/1. Its function is as follows. Catalyzes the reversible interconversion of serine and glycine with tetrahydrofolate (THF) serving as the one-carbon carrier. This reaction serves as the major source of one-carbon groups required for the biosynthesis of purines, thymidylate, methionine, and other important biomolecules. Also exhibits THF-independent aldolase activity toward beta-hydroxyamino acids, producing glycine and aldehydes, via a retro-aldol mechanism. This Streptomyces griseus subsp. griseus (strain JCM 4626 / CBS 651.72 / NBRC 13350 / KCC S-0626 / ISP 5235) protein is Serine hydroxymethyltransferase.